Here is a 96-residue protein sequence, read N- to C-terminus: Co-chaperonin GroES (96 aa).

Belongs to the GroES chaperonin family. Heptamer of 7 subunits arranged in a ring. Interacts with the chaperonin GroEL.

Its subcellular location is the cytoplasm. Its function is as follows. Together with the chaperonin GroEL, plays an essential role in assisting protein folding. The GroEL-GroES system forms a nano-cage that allows encapsulation of the non-native substrate proteins and provides a physical environment optimized to promote and accelerate protein folding. GroES binds to the apical surface of the GroEL ring, thereby capping the opening of the GroEL channel. The chain is Co-chaperonin GroES from Allochromatium vinosum (Chromatium vinosum).